Here is a 175-residue protein sequence, read N- to C-terminus: NADH-ubiquinone oxidoreductase chain 6 (175 aa).

A run of 5 helical transmembrane segments spans residues 1–21, 25–45, 47–67, 88–108, and 149–169; these read MMLY…VGFS, SPIY…GIVL, FGGS…MMVV, AVLG…YYVL, and YGTW…VVIM.

Belongs to the complex I subunit 6 family. In terms of assembly, core subunit of respiratory chain NADH dehydrogenase (Complex I) which is composed of 45 different subunits.

The protein localises to the mitochondrion inner membrane. It carries out the reaction a ubiquinone + NADH + 5 H(+)(in) = a ubiquinol + NAD(+) + 4 H(+)(out). Functionally, core subunit of the mitochondrial membrane respiratory chain NADH dehydrogenase (Complex I) which catalyzes electron transfer from NADH through the respiratory chain, using ubiquinone as an electron acceptor. Essential for the catalytic activity and assembly of complex I. This Bos indicus (Zebu) protein is NADH-ubiquinone oxidoreductase chain 6 (MT-ND6).